Reading from the N-terminus, the 365-residue chain is U1 snRNP-associated protein usp109 (365 aa).

3 RRM domains span residues 3–79, 86–162, and 189–259; these read TSLW…VVPE, YMLF…SVKS, and TAVY…WARP.

In terms of assembly, component of the U1 snRNP complex.

It is found in the nucleus. This Schizosaccharomyces pombe (strain 972 / ATCC 24843) (Fission yeast) protein is U1 snRNP-associated protein usp109 (usp109).